Reading from the N-terminus, the 443-residue chain is Xaa-Pro dipeptidase (443 aa).

Asp-246, Asp-257, His-339, Glu-384, and Glu-423 together coordinate Mn(2+).

The protein belongs to the peptidase M24B family. Bacterial-type prolidase subfamily. Mn(2+) is required as a cofactor.

It carries out the reaction Xaa-L-Pro dipeptide + H2O = an L-alpha-amino acid + L-proline. In terms of biological role, splits dipeptides with a prolyl residue in the C-terminal position. The protein is Xaa-Pro dipeptidase of Shigella flexneri serotype 5b (strain 8401).